The following is a 211-amino-acid chain: Endonuclease III (211 aa).

In terms of domain architecture, HhH spans 108–127; it reads REALEALAGVGRKTANVVLN. [4Fe-4S] cluster contacts are provided by Cys-187, Cys-194, Cys-197, and Cys-203.

It belongs to the Nth/MutY family. [4Fe-4S] cluster serves as cofactor.

The enzyme catalyses 2'-deoxyribonucleotide-(2'-deoxyribose 5'-phosphate)-2'-deoxyribonucleotide-DNA = a 3'-end 2'-deoxyribonucleotide-(2,3-dehydro-2,3-deoxyribose 5'-phosphate)-DNA + a 5'-end 5'-phospho-2'-deoxyribonucleoside-DNA + H(+). In terms of biological role, DNA repair enzyme that has both DNA N-glycosylase activity and AP-lyase activity. The DNA N-glycosylase activity releases various damaged pyrimidines from DNA by cleaving the N-glycosidic bond, leaving an AP (apurinic/apyrimidinic) site. The AP-lyase activity cleaves the phosphodiester bond 3' to the AP site by a beta-elimination, leaving a 3'-terminal unsaturated sugar and a product with a terminal 5'-phosphate. The polypeptide is Endonuclease III (Haemophilus influenzae (strain ATCC 51907 / DSM 11121 / KW20 / Rd)).